The chain runs to 170 residues: Probable chemoreceptor glutamine deamidase CheD (170 aa).

It belongs to the CheD family.

It catalyses the reaction L-glutaminyl-[protein] + H2O = L-glutamyl-[protein] + NH4(+). Probably deamidates glutamine residues to glutamate on methyl-accepting chemotaxis receptors (MCPs), playing an important role in chemotaxis. The polypeptide is Probable chemoreceptor glutamine deamidase CheD (Maridesulfovibrio salexigens (strain ATCC 14822 / DSM 2638 / NCIMB 8403 / VKM B-1763) (Desulfovibrio salexigens)).